Consider the following 21-residue polypeptide: thr operon leader peptide (21 aa).

The protein belongs to the thr operon leader peptide family.

In terms of biological role, this protein is involved in control of the biosynthesis of threonine. This Salmonella choleraesuis (strain SC-B67) protein is thr operon leader peptide.